Here is a 216-residue protein sequence, read N- to C-terminus: Small ribosomal subunit protein uS3c (216 aa).

Residues 43–118 form the KH type-2 domain; it reads INNYVKKNMR…KLNITITRIE (76 aa).

It belongs to the universal ribosomal protein uS3 family. As to quaternary structure, part of the 30S ribosomal subunit.

Its subcellular location is the plastid. The chain is Small ribosomal subunit protein uS3c (rps3) from Cuscuta reflexa (Southern Asian dodder).